Here is a 214-residue protein sequence, read N- to C-terminus: MKDYQIEFIEFALEKQVLKFGEFTLKSGRTSPYFFNAGLFNTGRDLARLGRFYAAALEDAAIEYDVLFGPAYKGIPIATTTAVALADHYNKDVPYCFNRKEKKAHGEGGTLVGSELKGKIMLVDDVITAGTAIRESMEIIAENGADLSGVLIALDRQEKGKAELSAIQEVERDFNTKVISIVKLADLISYLESQGTMDQHLASVKAYRDQYGVA.

Lys26 is a binding site for 5-phospho-alpha-D-ribose 1-diphosphate. An orotate-binding site is contributed by 34–35 (FF). Residues 72 to 73 (YK), Arg99, Lys100, Lys103, His105, and 124 to 132 (DDVITAGTA) each bind 5-phospho-alpha-D-ribose 1-diphosphate. 2 residues coordinate orotate: Thr128 and Arg156.

The protein belongs to the purine/pyrimidine phosphoribosyltransferase family. PyrE subfamily. Homodimer. The cofactor is Mg(2+).

It catalyses the reaction orotidine 5'-phosphate + diphosphate = orotate + 5-phospho-alpha-D-ribose 1-diphosphate. The protein operates within pyrimidine metabolism; UMP biosynthesis via de novo pathway; UMP from orotate: step 1/2. In terms of biological role, catalyzes the transfer of a ribosyl phosphate group from 5-phosphoribose 1-diphosphate to orotate, leading to the formation of orotidine monophosphate (OMP). The polypeptide is Orotate phosphoribosyltransferase (Pseudoalteromonas translucida (strain TAC 125)).